A 309-amino-acid chain; its full sequence is Probable lipid kinase YegS-like (309 aa).

Residues 1–134 enclose the DAGKc domain; that stretch reads MAPSHWRVIL…VDLLRIDADH (134 aa). ATP contacts are provided by residues Thr-39, 65–71, and Thr-96; that span reads GDGTLSE. 3 residues coordinate Mg(2+): Leu-219, Asp-222, and Leu-224. Glu-280 functions as the Proton acceptor in the catalytic mechanism.

This sequence belongs to the diacylglycerol/lipid kinase family. YegS lipid kinase subfamily. It depends on Mg(2+) as a cofactor. Ca(2+) serves as cofactor.

The protein localises to the cytoplasm. Its function is as follows. Probably phosphorylates lipids; the in vivo substrate is unknown. This chain is Probable lipid kinase YegS-like, found in Xanthomonas euvesicatoria pv. vesicatoria (strain 85-10) (Xanthomonas campestris pv. vesicatoria).